The chain runs to 211 residues: LexA repressor (211 aa).

Positions 28-48 (VREVGEAVGLSSSSTIHGHIE) form a DNA-binding region, H-T-H motif. Active-site for autocatalytic cleavage activity residues include Ser132 and Lys170.

It belongs to the peptidase S24 family. In terms of assembly, homodimer.

The enzyme catalyses Hydrolysis of Ala-|-Gly bond in repressor LexA.. Represses a number of genes involved in the response to DNA damage (SOS response), including recA and lexA. In the presence of single-stranded DNA, RecA interacts with LexA causing an autocatalytic cleavage which disrupts the DNA-binding part of LexA, leading to derepression of the SOS regulon and eventually DNA repair. The sequence is that of LexA repressor from Leuconostoc citreum (strain KM20).